The following is an 833-amino-acid chain: Putative GPI inositol-deacylase C (833 aa).

The active site involves S130. N-linked (GlcNAc...) asparagine glycans are attached at residues N191 and N456. Transmembrane regions (helical) follow at residues 521–541 (ILFI…QFHA), 560–580 (YLLT…LSQV), 617–637 (VLAP…TELV), 672–692 (TVFV…QLAF), and 723–743 (TICV…AVWI). An N-linked (GlcNAc...) asparagine glycan is attached at N772. A helical transmembrane segment spans residues 787–807 (LLLAYTSLHCLFYGMMQAFMI).

It belongs to the GPI inositol-deacylase family.

Its subcellular location is the endoplasmic reticulum membrane. Involved in inositol deacylation of GPI-anchored proteins which plays important roles in the quality control and ER-associated degradation of GPI-anchored proteins. The chain is Putative GPI inositol-deacylase C (BST1C) from Yarrowia lipolytica (strain CLIB 122 / E 150) (Yeast).